The sequence spans 2475 residues: Polyprotein pp220 (2475 aa).

Glycine 2 carries N-myristoyl glycine; by host lipidation. The stretch at 2184 to 2211 forms a coiled coil; sequence RNQIIGELNAFRTQLEDTRREVNNLIQT.

This sequence belongs to the asfivirus polyprotein pp220 family. Post-translationally, the polyprotein is not glycosylated. Specific enzymatic cleavages in vivo by the viral pS273R protease yield mature proteins.

It is found in the host cytoplasm. The protein resides in the host perinuclear region. Its subcellular location is the virion. The protein localises to the host nucleus. In terms of biological role, essential for the core assembly. Its myristoyl moiety may function as a membrane-anchoring signal to bind the developing core shell to the inner viral envelope. Functionally, the structural protein p34 is a component of the virus core shell. Its function is as follows. The structural protein p14 is a component of the virus core shell. The structural protein p37 is a component of the virus core shell. In terms of biological role, the structural protein p150 is a component of the virus core shell. The protein is Polyprotein pp220 of African swine fever virus (isolate Warthog/Namibia/Wart80/1980) (ASFV).